The sequence spans 399 residues: Lipid droplet-regulating VLDL assembly factor AUP1 (399 aa).

Over 1-21 (MEQPSLESMLELQRFPRNPFS) the chain is Cytoplasmic. An intramembrane segment occupies 22–42 (LVLLLLYFPFGLCLFLIRLFI). Residues 43 to 399 (GAHVFLVSCV…GEEEEEGARG (357 aa)) are Cytoplasmic-facing. A CUE domain is found at 284 to 326 (THIQMAQHVKEVLPQVPLSAIHRDLGHTGCVDTTITNFLEGRV). The interval 332 to 364 (EEETTGAAEGTSKSRVSRPLPQGFAKKPEDRHL) is disordered.

It belongs to the AUP1 family.

It localises to the endoplasmic reticulum membrane. The protein resides in the lipid droplet. Functionally, plays a role in the translocation of terminally misfolded proteins from the endoplasmic reticulum lumen to the cytoplasm and their degradation by the proteasome. Plays a role in lipid droplet formation. Induces lipid droplet clustering. This chain is Lipid droplet-regulating VLDL assembly factor AUP1, found in Xenopus laevis (African clawed frog).